We begin with the raw amino-acid sequence, 421 residues long: Serine hydroxymethyltransferase (421 aa).

Residues Leu-121 and 125–127 contribute to the (6S)-5,6,7,8-tetrahydrofolate site; that span reads GHL. Lys-230 carries the N6-(pyridoxal phosphate)lysine modification. 355–357 lines the (6S)-5,6,7,8-tetrahydrofolate pocket; that stretch reads SPF.

The protein belongs to the SHMT family. In terms of assembly, homodimer. Pyridoxal 5'-phosphate serves as cofactor.

It localises to the cytoplasm. The enzyme catalyses (6R)-5,10-methylene-5,6,7,8-tetrahydrofolate + glycine + H2O = (6S)-5,6,7,8-tetrahydrofolate + L-serine. Its pathway is one-carbon metabolism; tetrahydrofolate interconversion. It participates in amino-acid biosynthesis; glycine biosynthesis; glycine from L-serine: step 1/1. Its function is as follows. Catalyzes the reversible interconversion of serine and glycine with tetrahydrofolate (THF) serving as the one-carbon carrier. This reaction serves as the major source of one-carbon groups required for the biosynthesis of purines, thymidylate, methionine, and other important biomolecules. Also exhibits THF-independent aldolase activity toward beta-hydroxyamino acids, producing glycine and aldehydes, via a retro-aldol mechanism. The protein is Serine hydroxymethyltransferase of Psychromonas ingrahamii (strain DSM 17664 / CCUG 51855 / 37).